A 156-amino-acid polypeptide reads, in one-letter code: Small ribosomal subunit protein uS7 (156 aa).

The protein belongs to the universal ribosomal protein uS7 family. As to quaternary structure, part of the 30S ribosomal subunit. Contacts proteins S9 and S11.

Functionally, one of the primary rRNA binding proteins, it binds directly to 16S rRNA where it nucleates assembly of the head domain of the 30S subunit. Is located at the subunit interface close to the decoding center, probably blocks exit of the E-site tRNA. The chain is Small ribosomal subunit protein uS7 from Picosynechococcus sp. (strain ATCC 27264 / PCC 7002 / PR-6) (Agmenellum quadruplicatum).